The sequence spans 493 residues: Alpha-amylase-related protein (493 aa).

The signal sequence occupies residues Met1–Ala19. Gln20 carries the pyrrolidone carboxylic acid modification. A disulfide bridge connects residues Cys47 and Cys103. Residues Asn117, Gln168, and Asp177 each contribute to the Ca(2+) site. Residues Cys156 and Cys170 are joined by a disulfide bond. Arg205 is a chloride binding site. The active-site Nucleophile is Asp207. His211 contributes to the Ca(2+) binding site. Glu244 acts as the Proton donor in catalysis. Positions 307 and 342 each coordinate chloride. 3 disulfides stabilise this stretch: Cys375–Cys381, Cys417–Cys440, and Cys447–Cys459.

It belongs to the glycosyl hydrolase 13 family. In terms of assembly, monomer. It depends on Ca(2+) as a cofactor. Chloride serves as cofactor.

Its subcellular location is the secreted. The enzyme catalyses Endohydrolysis of (1-&gt;4)-alpha-D-glucosidic linkages in polysaccharides containing three or more (1-&gt;4)-alpha-linked D-glucose units.. The sequence is that of Alpha-amylase-related protein (Amyrel) from Drosophila ananassae (Fruit fly).